The primary structure comprises 343 residues: Cilia- and flagella-associated protein 36 (343 aa).

2 positions are modified to phosphoserine: Ser85 and Ser147. Residues Ser147 to Glu187 are a coiled coil. The disordered stretch occupies residues Lys165–Leu188. Ser201 carries the phosphoserine modification. 2 stretches are compositionally biased toward basic and acidic residues: residues Gln279–Thr293 and Gln301–Lys323. Residues Gln279 to Lys323 form a disordered region.

The protein belongs to the CFAP36 family. In terms of assembly, interacts with ARL3.

It is found in the nucleus. Its subcellular location is the cytoplasm. It localises to the cell projection. The protein localises to the cilium. The protein resides in the flagellum. Its function is as follows. May act as an effector for ARL3. The sequence is that of Cilia- and flagella-associated protein 36 from Mus musculus (Mouse).